Here is a 357-residue protein sequence, read N- to C-terminus: tRNA pseudouridine synthase D (357 aa).

The Nucleophile role is filled by aspartate 76. A TRUD domain is found at 151 to 331 (GMPNYFGYQR…DGRYKDEEAQ (181 aa)).

It belongs to the pseudouridine synthase TruD family.

It carries out the reaction uridine(13) in tRNA = pseudouridine(13) in tRNA. Its function is as follows. Responsible for synthesis of pseudouridine from uracil-13 in transfer RNAs. The polypeptide is tRNA pseudouridine synthase D (Sulfurimonas denitrificans (strain ATCC 33889 / DSM 1251) (Thiomicrospira denitrificans (strain ATCC 33889 / DSM 1251))).